The chain runs to 149 residues: Putative pre-16S rRNA nuclease (149 aa).

Belongs to the YqgF nuclease family.

Its subcellular location is the cytoplasm. Its function is as follows. Could be a nuclease involved in processing of the 5'-end of pre-16S rRNA. The chain is Putative pre-16S rRNA nuclease from Cupriavidus metallidurans (strain ATCC 43123 / DSM 2839 / NBRC 102507 / CH34) (Ralstonia metallidurans).